Consider the following 816-residue polypeptide: Probable E3 ubiquitin-protein ligase hulA (816 aa).

One can recognise a C2 domain in the interval 1–112; the sequence is MGSNLPAQPN…QMGGDEMLTR (112 aa). Disordered stretches follow at residues 134–238 and 253–353; these read NLST…WERR and RTTT…YFVD. 4 stretches are compositionally biased toward polar residues: residues 151–168, 177–202, 217–226, and 253–270; these read MQPS…ASTP, ADPT…STIV, SRTNLSSFED, and RTTT…QTSR. Residues 229–262 form the WW 1 domain; the sequence is GRLPAGWERREDNLGRTYYVDHNTRTTTWTRPSN. Residues 279 to 294 show a composition bias toward basic and acidic residues; that stretch reads LERRAHQSRMLPEDRT. Residues 295–309 show a composition bias toward polar residues; that stretch reads GASSPNLQENQQQAQ. Over residues 310-333 the composition is skewed to low complexity; the sequence is TPPAGGSASAVSMMATGATTAGTG. WW domains lie at 333-366 and 393-426; these read GELP…DPRR and GPLP…DPRL. The HECT domain maps to 482 to 816; it reads SASDLKKRLM…VEETLGFGQE (335 aa). Cysteine 784 functions as the Glycyl thioester intermediate in the catalytic mechanism.

Belongs to the RSP5/NEDD4 family. Interacts with creD.

The protein localises to the cytoplasm. It catalyses the reaction S-ubiquitinyl-[E2 ubiquitin-conjugating enzyme]-L-cysteine + [acceptor protein]-L-lysine = [E2 ubiquitin-conjugating enzyme]-L-cysteine + N(6)-ubiquitinyl-[acceptor protein]-L-lysine.. The protein operates within protein modification; protein ubiquitination. Functionally, E3 ubiquitin-protein ligase which accepts ubiquitin from an E2 ubiquitin-conjugating enzyme in the form of a thioester and then directly transfers the ubiquitin to targeted substrates. Probably involved in the regulatory network controlling carbon source utilization. This is Probable E3 ubiquitin-protein ligase hulA (hulA) from Aspergillus oryzae (strain ATCC 42149 / RIB 40) (Yellow koji mold).